Here is a 169-residue protein sequence, read N- to C-terminus: Peptide deformylase (169 aa).

Cysteine 91 and histidine 133 together coordinate Fe cation. Residue glutamate 134 is part of the active site. Histidine 137 serves as a coordination point for Fe cation.

It belongs to the polypeptide deformylase family. Fe(2+) is required as a cofactor.

It catalyses the reaction N-terminal N-formyl-L-methionyl-[peptide] + H2O = N-terminal L-methionyl-[peptide] + formate. Removes the formyl group from the N-terminal Met of newly synthesized proteins. Requires at least a dipeptide for an efficient rate of reaction. N-terminal L-methionine is a prerequisite for activity but the enzyme has broad specificity at other positions. The chain is Peptide deformylase from Escherichia coli (strain K12 / DH10B).